A 376-amino-acid polypeptide reads, in one-letter code: MSSVVSLAEISRAARPLNWLDSIIKGDCVAALNALPDHSVDVVFADPPYNLQLGGTLHRPDQSLVDAVDDDWDQFASFEAYDAFTRAWLLACRRVLKPTGTLWVIGSYHNIFRVGAILQDLHFWVLNDIIWRKTNPMPNFKGRRFQNAHETLIWATPNAKAKGYTFNYEAMKAANDDVQMRSDWLFPICSGSERLKGDDGKKVHPTQKPEALLARILMASTKPGDVVLDPFFGSGTTGAVAKRLGRHFVGIEREQDYIDAAAERIAAVEPLGKATLSVMTGKKAEPRVAFNTLVESGLIKPGTVLTDAKRRYSAIVRADGTLASGGEAGSIHRLGAKVQGLDACNGWTFWHFEEGSVLKPIDELRSVIRNDLAKLN.

Residues 273–370 (KATLSVMTGK…IDELRSVIRN (98 aa)) form the RAMA domain.

It belongs to the N(4)/N(6)-methyltransferase family.

It catalyses the reaction a 2'-deoxyadenosine in DNA + S-adenosyl-L-methionine = an N(6)-methyl-2'-deoxyadenosine in DNA + S-adenosyl-L-homocysteine + H(+). A beta subtype methylase that recognizes the double-stranded sequence 5'-GANTC-3' and methylates A-2 on both strands. Overexpression leads to many branched and bloated cells, two to three times the size of wild-type cells, and cells that have 1-3 times the normal amount of DNA. Contributes to the accurate cell-cycle control of DNA replication and cellular morphology. Can fully replace its ortholog in C.crescentus. The sequence is that of DNA methyltransferase CcrM (smeIM) from Rhizobium meliloti (strain 1021) (Ensifer meliloti).